The sequence spans 141 residues: Light-regulated protein 1, chloroplastic (141 aa).

A chloroplast-targeting transit peptide spans 1–41; sequence MQGALFIKPTILLPLPSSVSSPKLTFLLPHATKASRLSSLR. A compositionally biased stretch (low complexity) spans 35 to 51; that stretch reads SRLSSLRSNNSSSSSSL. The interval 35–58 is disordered; sequence SRLSSLRSNNSSSSSSLTSDPNTV. The segment at 58–132 is 2 X 15 AA approximate repeats; that stretch reads VDYNSSILSV…ACDDLGGEFC (75 aa). 2 consecutive repeat copies span residues 67 to 81 and 118 to 132.

Component of high molecular weight thylakoid LFNRs-containing protein complexes containing LIR1, LFNR1, LFNR2, TIC62 and TROL proteins. Interacts directly with LFNR1 and LFNR2; LIR1 increases the affinity of LFNR1 and LFNR2 for TIC62 and subsequent thylakoid relocalization. In terms of processing, may form interchain disulfide bonds with LFNR1 and LFNR2.

It is found in the plastid. The protein resides in the chloroplast thylakoid membrane. Its subcellular location is the chloroplast envelope. It localises to the chloroplast stroma. In terms of biological role, thylakoid-determinant subunit of high molecular weight LFNRs-containing protein complexes. The polypeptide is Light-regulated protein 1, chloroplastic (Arabidopsis thaliana (Mouse-ear cress)).